A 372-amino-acid polypeptide reads, in one-letter code: 4-hydroxy-3-methylbut-2-en-1-yl diphosphate synthase (flavodoxin) (372 aa).

[4Fe-4S] cluster is bound by residues cysteine 270, cysteine 273, cysteine 305, and glutamate 312.

The protein belongs to the IspG family. The cofactor is [4Fe-4S] cluster.

The catalysed reaction is (2E)-4-hydroxy-3-methylbut-2-enyl diphosphate + oxidized [flavodoxin] + H2O + 2 H(+) = 2-C-methyl-D-erythritol 2,4-cyclic diphosphate + reduced [flavodoxin]. It participates in isoprenoid biosynthesis; isopentenyl diphosphate biosynthesis via DXP pathway; isopentenyl diphosphate from 1-deoxy-D-xylulose 5-phosphate: step 5/6. Functionally, converts 2C-methyl-D-erythritol 2,4-cyclodiphosphate (ME-2,4cPP) into 1-hydroxy-2-methyl-2-(E)-butenyl 4-diphosphate. This is 4-hydroxy-3-methylbut-2-en-1-yl diphosphate synthase (flavodoxin) from Salmonella typhi.